Reading from the N-terminus, the 220-residue chain is Claudin-6 (220 aa).

At 1 to 7 (MASAGMQ) the chain is on the cytoplasmic side. Residues 8–28 (ILGVVLTLLGWVNGLVSCALP) form a helical membrane-spanning segment. At 29–81 (MWKVTAFIGNSIVVAQVVWEGLWMSCVVQSTGQMQCKVYDSLLALPQDLQAAR) the chain is on the extracellular side. Residues 82–102 (ALCVIALLVALFGLLVYLAGA) traverse the membrane as a helical segment. Residues 103–116 (KCTTCVEEKDSKAR) lie on the Cytoplasmic side of the membrane. Residues 117–137 (LVLTSGIVFVISGVLTLIPVC) form a helical membrane-spanning segment. Over 138-160 (WTAHAIIRDFYNPLVAEAQKREL) the chain is Extracellular. A helical membrane pass occupies residues 161–181 (GASLYLGWAASGLLLLGGGLL). Residues 182–220 (CCTCPSGGSQGPSHYMARYSTSAPAISRGPSEYPTKNYV) are Cytoplasmic-facing. 4 positions are modified to phosphoserine: serine 201, serine 203, serine 208, and serine 212. The segment at 219–220 (YV) is interactions with TJP1, TJP2 and TJP3.

It belongs to the claudin family. As to quaternary structure, directly interacts with TJP1/ZO-1, TJP2/ZO-2 and TJP3/ZO-3. Interacts with CLDN1, CD81 and OCLN. In terms of tissue distribution, expressed in the liver, in peripheral blood mononuclear cells and hepatocarcinoma cell lines.

The protein resides in the cell junction. The protein localises to the tight junction. It localises to the cell membrane. Its function is as follows. Plays a major role in tight junction-specific obliteration of the intercellular space. In terms of biological role, (Microbial infection) Acts as a receptor for hepatitis C virus (HCV) entry into hepatic cells. The protein is Claudin-6 (CLDN6) of Homo sapiens (Human).